Consider the following 206-residue polypeptide: Small ribosomal subunit protein uS4 (206 aa).

Positions 96-156 constitute an S4 RNA-binding domain; the sequence is GRLDNVVYRM…EKSKKQARIK (61 aa).

It belongs to the universal ribosomal protein uS4 family. In terms of assembly, part of the 30S ribosomal subunit. Contacts protein S5. The interaction surface between S4 and S5 is involved in control of translational fidelity.

Functionally, one of the primary rRNA binding proteins, it binds directly to 16S rRNA where it nucleates assembly of the body of the 30S subunit. In terms of biological role, with S5 and S12 plays an important role in translational accuracy. In Glaesserella parasuis serovar 5 (strain SH0165) (Haemophilus parasuis), this protein is Small ribosomal subunit protein uS4.